We begin with the raw amino-acid sequence, 74 residues long: Consomatin Ma1 (74 aa).

The N-terminal stretch at 1–22 is a signal peptide; it reads MQTAYWVMVMMMVWITAPLSEG. Positions 23-57 are excised as a propeptide; sequence GKLNGEIRGLVSHILIPQHTLRSLTSRDRSDNGGS. A disulfide bond links Cys-63 and Cys-68. The residue at position 65 (Trp-65) is a D-tryptophan. 4-hydroxyproline occurs at positions 69, 70, and 72.

The protein belongs to the conotoxin C superfamily. Consomatin family. In terms of tissue distribution, expressed by the venom duct.

It localises to the secreted. Functionally, moderately activates human somatostatin receptors (SSTR) with a preferential activation of SSTR1 and SSTR4. In vivo, does not cause behavioral changes in mice within a few minutes of intracranial injection, but causes a progressive loss of movement thereafter. Four to five hours after injection, mice recover, even with the highest dose tested. Shows antinociception and antihyperalgesia activities in two mouse models of acute pain, most probably by acting outside the central nervous system. In Conus magus (Magical cone), this protein is Consomatin Ma1.